The sequence spans 97 residues: UPF0147 protein MA_0092 (97 aa).

This sequence belongs to the UPF0147 family.

This chain is UPF0147 protein MA_0092, found in Methanosarcina acetivorans (strain ATCC 35395 / DSM 2834 / JCM 12185 / C2A).